The sequence spans 817 residues: U3 small nucleolar RNA-associated protein 13 (817 aa).

WD repeat units lie at residues Glu59–Lys100, Ser102–Ser139, Gly142–Gln187, Ser191–Leu233, Pro238–Arg280, Gly386–Asp425, Gly432–Asp476, Ala489–Thr528, Asn531–Glu572, Gly573–Asp614, His616–Glu654, and Glu664–Ser705.

Interacts with snoRNA U3. Interacts with MPP10. Component of the ribosomal small subunit (SSU) processome composed of at least 40 protein subunits and snoRNA U3.

Its subcellular location is the nucleus. It localises to the nucleolus. Functionally, involved in nucleolar processing of pre-18S ribosomal RNA. This chain is U3 small nucleolar RNA-associated protein 13 (UTP13), found in Saccharomyces cerevisiae (strain ATCC 204508 / S288c) (Baker's yeast).